The primary structure comprises 485 residues: Glutamyl-tRNA(Gln) amidotransferase subunit A (485 aa).

Catalysis depends on charge relay system residues lysine 79 and serine 154. Serine 178 acts as the Acyl-ester intermediate in catalysis.

Belongs to the amidase family. GatA subfamily. As to quaternary structure, heterotrimer of A, B and C subunits.

It carries out the reaction L-glutamyl-tRNA(Gln) + L-glutamine + ATP + H2O = L-glutaminyl-tRNA(Gln) + L-glutamate + ADP + phosphate + H(+). In terms of biological role, allows the formation of correctly charged Gln-tRNA(Gln) through the transamidation of misacylated Glu-tRNA(Gln) in organisms which lack glutaminyl-tRNA synthetase. The reaction takes place in the presence of glutamine and ATP through an activated gamma-phospho-Glu-tRNA(Gln). The protein is Glutamyl-tRNA(Gln) amidotransferase subunit A of Bacillus pumilus (strain SAFR-032).